Consider the following 23-residue polypeptide: Glutamine synthetase (23 aa).

It belongs to the glutamine synthetase family. Oligomer of 12 subunits arranged in the form of two hexagons. The cofactor is Mg(2+).

It is found in the cytoplasm. The enzyme catalyses L-glutamate + NH4(+) + ATP = L-glutamine + ADP + phosphate + H(+). With respect to regulation, the activity of this enzyme could be controlled by adenylation under conditions of abundant glutamine. Functionally, involved in nitrogen metabolism via ammonium assimilation. Catalyzes the ATP-dependent biosynthesis of glutamine from glutamate and ammonia. In Phormidium lapideum, this protein is Glutamine synthetase.